Reading from the N-terminus, the 232-residue chain is Ubiquinone biosynthesis O-methyltransferase (232 aa).

Residues Arg36, Gly55, Asp76, and Leu120 each contribute to the S-adenosyl-L-methionine site.

The protein belongs to the methyltransferase superfamily. UbiG/COQ3 family.

It carries out the reaction a 3-demethylubiquinol + S-adenosyl-L-methionine = a ubiquinol + S-adenosyl-L-homocysteine + H(+). The catalysed reaction is a 3-(all-trans-polyprenyl)benzene-1,2-diol + S-adenosyl-L-methionine = a 2-methoxy-6-(all-trans-polyprenyl)phenol + S-adenosyl-L-homocysteine + H(+). Its pathway is cofactor biosynthesis; ubiquinone biosynthesis. In terms of biological role, O-methyltransferase that catalyzes the 2 O-methylation steps in the ubiquinone biosynthetic pathway. This Pseudomonas aeruginosa (strain ATCC 15692 / DSM 22644 / CIP 104116 / JCM 14847 / LMG 12228 / 1C / PRS 101 / PAO1) protein is Ubiquinone biosynthesis O-methyltransferase.